Here is a 185-residue protein sequence, read N- to C-terminus: Prorelaxin (185 aa).

Residues 1–24 (MPRLFLFHLLGVCLLLNQFSRAVA) form the signal peptide. 3 disulfide bridges follow: Cys-35/Cys-172, Cys-47/Cys-185, and Cys-171/Cys-176. Positions 56–157 (SLNQEDAPLK…LRSLGLDTHS (102 aa)) are cleaved as a propeptide — connecting peptide.

Belongs to the insulin family. Heterodimer of a B chain and an A chain linked by two disulfide bonds.

It is found in the secreted. Functionally, relaxin is an ovarian hormone that acts with estrogen to produce dilatation of the birth canal in many mammals. May be involved in remodeling of connective tissues during pregnancy, promoting growth of pubic ligaments and ripening of the cervix. In Macaca mulatta (Rhesus macaque), this protein is Prorelaxin (RLN).